A 396-amino-acid chain; its full sequence is Phosphopentomutase (396 aa).

Residues aspartate 13, aspartate 288, histidine 293, aspartate 329, histidine 330, and histidine 341 each contribute to the Mn(2+) site.

The protein belongs to the phosphopentomutase family. Mn(2+) serves as cofactor.

The protein resides in the cytoplasm. The catalysed reaction is 2-deoxy-alpha-D-ribose 1-phosphate = 2-deoxy-D-ribose 5-phosphate. It carries out the reaction alpha-D-ribose 1-phosphate = D-ribose 5-phosphate. Its pathway is carbohydrate degradation; 2-deoxy-D-ribose 1-phosphate degradation; D-glyceraldehyde 3-phosphate and acetaldehyde from 2-deoxy-alpha-D-ribose 1-phosphate: step 1/2. Its function is as follows. Isomerase that catalyzes the conversion of deoxy-ribose 1-phosphate (dRib-1-P) and ribose 1-phosphate (Rib-1-P) to deoxy-ribose 5-phosphate (dRib-5-P) and ribose 5-phosphate (Rib-5-P), respectively. This Clostridium perfringens (strain SM101 / Type A) protein is Phosphopentomutase.